We begin with the raw amino-acid sequence, 31 residues long: Photosystem II reaction center protein T (31 aa).

The chain crosses the membrane as a helical span at residues 3 to 23 (AFTYTLLMTLGVVTLFFAVAF).

Belongs to the PsbT family. As to quaternary structure, PSII is composed of 1 copy each of membrane proteins PsbA, PsbB, PsbC, PsbD, PsbE, PsbF, PsbH, PsbI, PsbJ, PsbK, PsbL, PsbM, PsbT, PsbX, PsbY, Psb30/Ycf12, peripheral proteins PsbO, CyanoQ (PsbQ), PsbU, PsbV and a large number of cofactors. It forms dimeric complexes.

The protein localises to the cellular thylakoid membrane. In terms of biological role, found at the monomer-monomer interface of the photosystem II (PS II) dimer, plays a role in assembly and dimerization of PSII. PSII is a light-driven water plastoquinone oxidoreductase, using light energy to abstract electrons from H(2)O, generating a proton gradient subsequently used for ATP formation. The polypeptide is Photosystem II reaction center protein T (Prochlorococcus marinus (strain SARG / CCMP1375 / SS120)).